The chain runs to 245 residues: 1-(5-phosphoribosyl)-5-[(5-phosphoribosylamino)methylideneamino] imidazole-4-carboxamide isomerase (245 aa).

Asp8 serves as the catalytic Proton acceptor. Catalysis depends on Asp129, which acts as the Proton donor.

It belongs to the HisA/HisF family.

The protein resides in the cytoplasm. The enzyme catalyses 1-(5-phospho-beta-D-ribosyl)-5-[(5-phospho-beta-D-ribosylamino)methylideneamino]imidazole-4-carboxamide = 5-[(5-phospho-1-deoxy-D-ribulos-1-ylimino)methylamino]-1-(5-phospho-beta-D-ribosyl)imidazole-4-carboxamide. It participates in amino-acid biosynthesis; L-histidine biosynthesis; L-histidine from 5-phospho-alpha-D-ribose 1-diphosphate: step 4/9. The sequence is that of 1-(5-phosphoribosyl)-5-[(5-phosphoribosylamino)methylideneamino] imidazole-4-carboxamide isomerase from Sinorhizobium fredii (strain NBRC 101917 / NGR234).